Here is a 776-residue protein sequence, read N- to C-terminus: Protocadherin beta-16 (776 aa).

The N-terminal stretch at 1 to 28 (MEIGWMHNRRQRQVLVFFVLLSLSGAGA) is a signal peptide. Residues 29–690 (ELGSYSVVEE…TQANSLTVYL (662 aa)) lie on the Extracellular side of the membrane. Cadherin domains lie at 35–133 (VVEE…SPMF), 138–242 (MILK…APEF), 247–347 (YKVQ…PPQV), 352–451 (LTSP…APTF), and 456–561 (YTLF…SPFV). 2 N-linked (GlcNAc...) asparagine glycosylation sites follow: N418 and N436. N-linked (GlcNAc...) asparagine glycosylation is present at N567. Residues 568–671 (GSAPCTELVP…LVDGFSQPFL (104 aa)) enclose the Cadherin 6 domain. The chain crosses the membrane as a helical span at residues 691–711 (VVALASVSSLFLFSVLLFVAV). The Cytoplasmic segment spans residues 712 to 776 (RLCRRSRAAS…LKPIIPNFSP (65 aa)).

It is found in the membrane. Functionally, potential calcium-dependent cell-adhesion protein. May be involved in the establishment and maintenance of specific neuronal connections in the brain. The protein is Protocadherin beta-16 of Homo sapiens (Human).